We begin with the raw amino-acid sequence, 127 residues long: MFIKFKISNRPIAPHLLVYTPQLSSLFSIWHRISGVGLAFFFTTFLIFIRIILSSNFACNLLTLISFEISQWIIIYFNLFILLFLFYHLFNGTRHIIWDFGFLLDIKYLSKFSLFLLVSLSLILIFQ.

The next 2 helical transmembrane spans lie at 36–53 (VGLA…RIIL) and 60–83 (NLLT…FILL). His88 contributes to the heme binding site. Residues 109–126 (LSKFSLFLLVSLSLILIF) form a helical membrane-spanning segment.

The protein belongs to the cytochrome b560 family. As to quaternary structure, forms part of complex II containing four subunits: a 70 kDa flavoprotein (FP), a 27 kDa iron-sulfur protein (IP), a cytochrome B and a membrane-anchoring protein. Heme serves as cofactor.

The protein localises to the mitochondrion inner membrane. It functions in the pathway carbohydrate metabolism; tricarboxylic acid cycle. In terms of biological role, membrane-anchoring subunit of succinate dehydrogenase (SDH) that is involved in complex II of the mitochondrial electron transport chain and is responsible for transferring electrons from succinate to ubiquinone (coenzyme Q). The sequence is that of Succinate dehydrogenase cytochrome b560 subunit (SDH3) from Chondrus crispus (Carrageen Irish moss).